Here is a 569-residue protein sequence, read N- to C-terminus: Sulfite reductase [NADPH] hemoprotein beta-component (569 aa).

Positions 433, 439, 478, and 482 each coordinate [4Fe-4S] cluster. A siroheme-binding site is contributed by Cys-482.

This sequence belongs to the nitrite and sulfite reductase 4Fe-4S domain family. As to quaternary structure, alpha(8)-beta(8). The alpha component is a flavoprotein, the beta component is a hemoprotein. It depends on siroheme as a cofactor. [4Fe-4S] cluster serves as cofactor.

It catalyses the reaction hydrogen sulfide + 3 NADP(+) + 3 H2O = sulfite + 3 NADPH + 4 H(+). Its pathway is sulfur metabolism; hydrogen sulfide biosynthesis; hydrogen sulfide from sulfite (NADPH route): step 1/1. Functionally, component of the sulfite reductase complex that catalyzes the 6-electron reduction of sulfite to sulfide. This is one of several activities required for the biosynthesis of L-cysteine from sulfate. This is Sulfite reductase [NADPH] hemoprotein beta-component from Pseudoalteromonas atlantica (strain T6c / ATCC BAA-1087).